The primary structure comprises 192 residues: Cytidylate kinase (192 aa).

7-15 lines the ATP pocket; it reads GPPGSGKST.

This sequence belongs to the cytidylate kinase family. Type 2 subfamily.

The protein localises to the cytoplasm. It catalyses the reaction CMP + ATP = CDP + ADP. The catalysed reaction is dCMP + ATP = dCDP + ADP. The protein is Cytidylate kinase of Halobacterium salinarum (strain ATCC 29341 / DSM 671 / R1).